Consider the following 274-residue polypeptide: Large ribosomal subunit protein uL2 (274 aa).

The tract at residues 220–265 is disordered; it reads VRGAAMNPRDHPHGGGEGRAPRGMSTPKTKWGKPARGVKTRHNPRF. Residues 227-239 are compositionally biased toward basic and acidic residues; that stretch reads PRDHPHGGGEGRA. The span at 249-262 shows a compositional bias: basic residues; it reads KWGKPARGVKTRHN.

This sequence belongs to the universal ribosomal protein uL2 family. In terms of assembly, part of the 50S ribosomal subunit. Forms a bridge to the 30S subunit in the 70S ribosome.

Functionally, one of the primary rRNA binding proteins. Required for association of the 30S and 50S subunits to form the 70S ribosome, for tRNA binding and peptide bond formation. It has been suggested to have peptidyltransferase activity; this is somewhat controversial. Makes several contacts with the 16S rRNA in the 70S ribosome. This Chloroflexus aurantiacus (strain ATCC 29364 / DSM 637 / Y-400-fl) protein is Large ribosomal subunit protein uL2.